The following is a 30-amino-acid chain: Dermaseptin-3.1TR (30 aa).

As to expression, expressed by the skin glands.

Its subcellular location is the secreted. Has antimicrobial activity. This chain is Dermaseptin-3.1TR, found in Phyllomedusa trinitatis (Trinidad leaf frog).